The following is a 344-amino-acid chain: tRNA N6-adenosine threonylcarbamoyltransferase (344 aa).

Fe cation-binding residues include His110 and His114. Residues 133-137 (AVSGA), Asp166, Gly179, and Asn278 each bind substrate. Position 303 (Asp303) interacts with Fe cation.

The protein belongs to the KAE1 / TsaD family. Requires Fe(2+) as cofactor.

It localises to the cytoplasm. The catalysed reaction is L-threonylcarbamoyladenylate + adenosine(37) in tRNA = N(6)-L-threonylcarbamoyladenosine(37) in tRNA + AMP + H(+). Its function is as follows. Required for the formation of a threonylcarbamoyl group on adenosine at position 37 (t(6)A37) in tRNAs that read codons beginning with adenine. Is involved in the transfer of the threonylcarbamoyl moiety of threonylcarbamoyl-AMP (TC-AMP) to the N6 group of A37, together with TsaE and TsaB. TsaD likely plays a direct catalytic role in this reaction. This chain is tRNA N6-adenosine threonylcarbamoyltransferase, found in Chlamydia caviae (strain ATCC VR-813 / DSM 19441 / 03DC25 / GPIC) (Chlamydophila caviae).